We begin with the raw amino-acid sequence, 362 residues long: Endopolygalacturonase II (362 aa).

An N-terminal signal peptide occupies residues methionine 1–alanine 21. Residues serine 22 to arginine 27 constitute a propeptide that is removed on maturation. A disulfide bridge connects residues cysteine 30 and cysteine 45. A PbH1 1 repeat occupies alanine 156 to asparagine 186. Aspartate 201 (proton donor) is an active-site residue. An intrachain disulfide couples cysteine 203 to cysteine 219. 4 PbH1 repeats span residues glycine 209 to serine 229, valine 238 to threonine 259, valine 267 to glutamine 289, and threonine 301 to alanine 322. Histidine 223 is a catalytic residue. An N-linked (GlcNAc...) (high mannose) asparagine glycan is attached at asparagine 240. Intrachain disulfides connect cysteine 329–cysteine 334 and cysteine 353–cysteine 362.

It belongs to the glycosyl hydrolase 28 family.

It localises to the secreted. It catalyses the reaction (1,4-alpha-D-galacturonosyl)n+m + H2O = (1,4-alpha-D-galacturonosyl)n + (1,4-alpha-D-galacturonosyl)m.. Its function is as follows. Involved in maceration and soft-rotting of plant tissue. Hydrolyzes the 1,4-alpha glycosidic bonds of de-esterified pectate in the smooth region of the plant cell wall. This Aspergillus niger (strain ATCC 1015 / CBS 113.46 / FGSC A1144 / LSHB Ac4 / NCTC 3858a / NRRL 328 / USDA 3528.7) protein is Endopolygalacturonase II (pgaII).